Reading from the N-terminus, the 63-residue chain is uncharacterized protein (63 aa).

A signal peptide spans 1–21; sequence MNRALILTFVLFFALFAISSA.

This is an uncharacterized protein from Dictyostelium discoideum (Social amoeba).